Consider the following 105-residue polypeptide: Pyrimidine/purine nucleoside phosphorylase (105 aa).

This sequence belongs to the nucleoside phosphorylase PpnP family.

It catalyses the reaction a purine D-ribonucleoside + phosphate = a purine nucleobase + alpha-D-ribose 1-phosphate. The enzyme catalyses adenosine + phosphate = alpha-D-ribose 1-phosphate + adenine. It carries out the reaction cytidine + phosphate = cytosine + alpha-D-ribose 1-phosphate. The catalysed reaction is guanosine + phosphate = alpha-D-ribose 1-phosphate + guanine. It catalyses the reaction inosine + phosphate = alpha-D-ribose 1-phosphate + hypoxanthine. The enzyme catalyses thymidine + phosphate = 2-deoxy-alpha-D-ribose 1-phosphate + thymine. It carries out the reaction uridine + phosphate = alpha-D-ribose 1-phosphate + uracil. The catalysed reaction is xanthosine + phosphate = alpha-D-ribose 1-phosphate + xanthine. Functionally, catalyzes the phosphorolysis of diverse nucleosides, yielding D-ribose 1-phosphate and the respective free bases. Can use uridine, adenosine, guanosine, cytidine, thymidine, inosine and xanthosine as substrates. Also catalyzes the reverse reactions. This Cupriavidus necator (strain ATCC 17699 / DSM 428 / KCTC 22496 / NCIMB 10442 / H16 / Stanier 337) (Ralstonia eutropha) protein is Pyrimidine/purine nucleoside phosphorylase.